The following is a 350-amino-acid chain: Serine-threonine kinase receptor-associated protein (350 aa).

WD repeat units follow at residues 12 to 56, 57 to 96, 98 to 137, 141 to 179, 180 to 212, 221 to 262, and 263 to 302; these read GHTR…GTFL, GHKG…ELMT, AHKH…AEPK, GHTS…EVKS, LNFN…HSAV, EAPA…ESYK, and GHFG…TYGL. Residues serine 312, serine 335, and serine 338 each carry the phosphoserine modification. Residues 326–350 form a disordered region; that stretch reads AEEELEEIASENSDSIYSSTPEVKA. A compositionally biased stretch (polar residues) spans 337–350; that stretch reads NSDSIYSSTPEVKA. Residue tyrosine 342 is modified to Phosphotyrosine.

This sequence belongs to the WD repeat STRAP family. As to quaternary structure, part of the core SMN complex that contains SMN1, GEMIN2/SIP1, DDX20/GEMIN3, GEMIN4, GEMIN5, GEMIN6, GEMIN7, GEMIN8 and STRAP/UNRIP. Part of the SMN-Sm complex that contains SMN1, GEMIN2/SIP1, DDX20/GEMIN3, GEMIN4, GEMIN5, GEMIN6, GEMIN7, GEMIN8, STRAP/UNRIP and the Sm proteins SNRPB, SNRPD1, SNRPD2, SNRPD3, SNRPE, SNRPF and SNRPG. Interacts directly with GEMIN6 and GEMIN7. Associates with the SMN complex in the cytoplasm but not in the nucleus. Also interacts with CSDE1/UNR and MAWBP. Interacts with PDPK1. Interacts with TRIM48.

It localises to the cytoplasm. It is found in the nucleus. In terms of biological role, the SMN complex catalyzes the assembly of small nuclear ribonucleoproteins (snRNPs), the building blocks of the spliceosome, and thereby plays an important role in the splicing of cellular pre-mRNAs. Most spliceosomal snRNPs contain a common set of Sm proteins SNRPB, SNRPD1, SNRPD2, SNRPD3, SNRPE, SNRPF and SNRPG that assemble in a heptameric protein ring on the Sm site of the small nuclear RNA to form the core snRNP (Sm core). In the cytosol, the Sm proteins SNRPD1, SNRPD2, SNRPE, SNRPF and SNRPG are trapped in an inactive 6S pICln-Sm complex by the chaperone CLNS1A that controls the assembly of the core snRNP. To assemble core snRNPs, the SMN complex accepts the trapped 5Sm proteins from CLNS1A forming an intermediate. Binding of snRNA inside 5Sm triggers eviction of the SMN complex, thereby allowing binding of SNRPD3 and SNRPB to complete assembly of the core snRNP. STRAP plays a role in the cellular distribution of the SMN complex. Negatively regulates TGF-beta signaling but positively regulates the PDPK1 kinase activity by enhancing its autophosphorylation and by significantly reducing the association of PDPK1 with 14-3-3 protein. In Rattus norvegicus (Rat), this protein is Serine-threonine kinase receptor-associated protein (Strap).